The chain runs to 577 residues: MSNPRTKSPNTNRGQGLRSERSALLNDSLSSLNGNSSYDSIKDSSKNNKDVAEVNEYPRRPESSVSVVSNSPHRQDAATTNTVSTVSVSKVLPALLLGVVLAALDNTIVASTYTKIGAEFGKFSQVSWTATAYMISCTAFQPLFGKFCDIYGRKKTLLAAYCVFGIGCFLCGTSRSLWQLVAARAIAGIGGGGMNSTVSILMSDIVPLKQRGTYQGIINVFFAIGSSLGGPVGGYFADQYTWRIGFLIQVPLIAIAFLCVYFTLNLPHHNHVSFMTRFRKIDLKGLILLIIGVTTMTCAFTLGGNVREWNDPVVISLLIASSISYLSFVYVEAFVAFEPLAPMDVLTERTCLSSYLCNFFHSVANFGWIYGMPLFFQSIKNEGAEKSGIRLIPMIIGSSLGSLLGGAVISLTGNYKKITVGSYFFGSVAALFMLRYGYSNFNWEYAVYPFSGGLGNGIAVTTTLVAIIHASPSAFQASAIATSYLFRSNGCVLGVSISSSIVQTVLGIKLRKSLDFDVDELLHHLRKDISYVHRLPEEIRQTVLDALLGSIHYSFLFVSFMFFCAFVCSMFIKNRNL.

The segment covering 1 to 14 (MSNPRTKSPNTNRG) has biased composition (polar residues). Residues 1-80 (MSNPRTKSPN…SPHRQDAATT (80 aa)) form a disordered region. Positions 22–39 (SALLNDSLSSLNGNSSYD) are enriched in low complexity. The segment covering 40–62 (SIKDSSKNNKDVAEVNEYPRRPE) has biased composition (basic and acidic residues). 14 helical membrane passes run 91–111 (VLPA…IVAS), 123–145 (FSQV…PLFG), 157–177 (LLAA…SRSL), 186–206 (IAGI…SDIV), 217–237 (IINV…GYFA), 244–264 (IGFL…YFTL), 286–306 (LILL…GGNV), 317–337 (LLIA…FVAF), 356–376 (LCNF…PLFF), 391–411 (LIPM…VISL), 418–438 (ITVG…RYGY), 448–468 (YPFS…VAII), 490–510 (GCVL…GIKL), and 547–567 (LLGS…CAFV).

The protein belongs to the major facilitator superfamily.

It is found in the vacuole. The protein resides in the membrane. Functionally, MFS-type transporter involved in vacuolar amino acid uptake. This Schizosaccharomyces pombe (strain 972 / ATCC 24843) (Fission yeast) protein is Vacuolar membrane amino acid uptake transporter fnx2 (fnx2).